An 896-amino-acid chain; its full sequence is NEDD4-binding protein 1 (896 aa).

Residues Gln59–Asn143 enclose the KH-like domain. Ser226 carries the post-translational modification Phosphoserine. Phosphothreonine is present on Thr242. A phosphoserine mark is found at Ser258 and Ser300. 2 disordered regions span residues Tyr403–Thr430 and Glu488–Val507. Over residues Val414–Thr430 the composition is skewed to polar residues. Ser562 is subject to Phosphoserine. The RNase NYN domain maps to Leu617 to Glu769. A disordered region spans residues Gly801–Ser821. The span at Gln803–Thr813 shows a compositional bias: polar residues. The coCUN stretch occupies residues Arg849–Asp896.

This sequence belongs to the N4BP1 family. Interacts with NEDD4. Interacts with ITCH (via WW domain 2). Proteolytically cleaved by CASP8 downstream of TLR3 or TLR4, leading to its inactivation. Mainly cleaved at Asp-490 by CASP8. Cleaved by caspase-like protein MALT1 in T-cells following TCR-mediated activation, leading to its inactivation and subsequent viral reactivation during HIV-1 infection. Post-translationally, mono- and polyubiquitinated on the CoCUN region. Monoubiquitinated by NEDD4. Polyubiquitinated, leading to its degradation by the proteasome. Sumoylated with SUMO1, abrogating polyubiquitination and subsequent degradation. Desumoylated by SENP1, leading to accumulation in PML nuclear bodies. Detected in heart, lung, brain, liver, skeletal muscle, pancreas, kidney, spleen, testis and ovary.

The protein resides in the cytoplasm. The protein localises to the cytosol. It is found in the nucleus. It localises to the nucleolus. Its subcellular location is the PML body. Proteolytic cleavage by CASP8 or MALT1 leads to its inactivation. Potent suppressor of cytokine production that acts as a regulator of innate immune signaling and inflammation. Acts as a key negative regulator of select cytokine and chemokine responses elicited by TRIF-independent Toll-like receptors (TLRs), thereby limiting inflammatory cytokine responses to minor insults. In response to more threatening pathogens, cleaved by CASP8 downstream of TLR3 or TLR4, leading to its inactivation, thereby allowing production of inflammatory cytokines. Acts as a restriction factor against some viruses, such as HIV-1: restricts HIV-1 replication by binding to HIV-1 mRNAs and mediating their degradation via its ribonuclease activity. Also acts as an inhibitor of the E3 ubiquitin-protein ligase ITCH: acts by interacting with the second WW domain of ITCH, leading to compete with ITCH's substrates and impairing ubiquitination of substrates. The protein is NEDD4-binding protein 1 of Homo sapiens (Human).